Here is a 275-residue protein sequence, read N- to C-terminus: Ribosome biogenesis protein RLP7 (275 aa).

Residues 14 to 45 (KRKNNDRKRLEKQEQARQRQLEQKKKNDQRSK) are disordered. The span at 20 to 44 (RKRLEKQEQARQRQLEQKKKNDQRS) shows a compositional bias: basic and acidic residues.

Belongs to the universal ribosomal protein uL30 family.

The protein resides in the nucleus. Its subcellular location is the nucleolus. Involved in the biogenesis of the 60S ribosomal subunit. May act as a specificity factor that binds precursor rRNAs and tethers the enzymes that carry out the early 5' to 3' exonucleolytic reactions that generate the mature rRNAs. This is Ribosome biogenesis protein RLP7 (RLP7) from Debaryomyces hansenii (strain ATCC 36239 / CBS 767 / BCRC 21394 / JCM 1990 / NBRC 0083 / IGC 2968) (Yeast).